The following is a 157-amino-acid chain: Parasitophorous vacuole membrane protein S16 (157 aa).

The first 25 residues, 1–25 (MNIRKFIPSLALMLIFFAFANLVLS), serve as a signal peptide directing secretion. Residues 26-105 (DANDKAKKPA…DKKTTVNRNL (80 aa)) lie on the Extracellular side of the membrane. Residues 30–74 (KAKKPAGKGSPSTLQTPGSSSGASLHAVGPNQGGLSQGLSGKDSA) are disordered. The span at 39 to 52 (SPSTLQTPGSSSGA) shows a compositional bias: polar residues. The chain crosses the membrane as a helical span at residues 106-126 (IISTAVTNMIMLIILSGIVGF). The Cytoplasmic portion of the chain corresponds to 127–157 (KVKKTKNADDDKGDKDKDKDNTDEGDEGDDS). Positions 130-157 (KTKNADDDKGDKDKDKDNTDEGDEGDDS) are disordered. The span at 132–148 (KNADDDKGDKDKDKDNT) shows a compositional bias: basic and acidic residues.

The protein resides in the parasitophorous vacuole membrane. The protein localises to the vacuole. In terms of biological role, involved in male gametogenesis. Required for exflagellation of male gametocytes. May play a role in parasite transmission in the mosquito. Binds to the mosquito vector midgut. The chain is Parasitophorous vacuole membrane protein S16 from Plasmodium falciparum (isolate 3D7).